We begin with the raw amino-acid sequence, 429 residues long: Lysophosphatidic acid phosphatase type 6 (429 aa).

Residues methionine 1–alanine 32 constitute a mitochondrion transit peptide. The interval arginine 58 to arginine 169 is substrate binding. Histidine 59 functions as the Nucleophile in the catalytic mechanism. Catalysis depends on aspartate 336, which acts as the Proton donor.

Belongs to the histidine acid phosphatase family. In terms of assembly, monomer. Detected in brain (at protein level).

The protein resides in the mitochondrion. It carries out the reaction a phosphate monoester + H2O = an alcohol + phosphate. The catalysed reaction is 1-(9Z-octadecenoyl)-sn-glycero-3-phosphate + H2O = 1-(9Z-octadecenoyl)-sn-glycerol + phosphate. Functionally, hydrolyzes lysophosphatidic acid (LPA) containing a medium length fatty acid chain to the corresponding monoacylglycerol. Has highest activity with lysophosphatidic acid containing myristate (C14:0), monounsaturated oleate (C18:1) or palmitate (C16:0), and lower activity with C18:0 and C6:0 lysophosphatidic acid. The polypeptide is Lysophosphatidic acid phosphatase type 6 (ACP6) (Bos taurus (Bovine)).